The sequence spans 146 residues: Interleukin-13 (146 aa).

Positions 1–24 (MHPLLNPLLLALGLMALLLTTVIA) are cleaved as a signal peptide. N-linked (GlcNAc...) asparagine glycans are attached at residues Asn-52, Asn-63, Asn-71, and Asn-86. Intrachain disulfides connect Cys-62–Cys-90 and Cys-78–Cys-104.

The protein belongs to the IL-4/IL-13 family. As to quaternary structure, interacts with IL13RA2.

Its subcellular location is the secreted. Its function is as follows. Cytokine that plays important roles in allergic inflammation and immune response to parasite infection. Synergizes with IL2 in regulating interferon-gamma synthesis. Stimulates B-cell proliferation, and activation of eosinophils, basophils, and mast cells. Plays an important role in controlling IL33 activity by modulating the production of transmembrane and soluble forms of interleukin-1 receptor-like 1/IL1RL1. Displays the capacity to antagonize Th1-driven proinflammatory immune response and downregulates synthesis of many proinflammatory cytokines including IL1, IL6, IL10, IL12 and TNF-alpha through a mechanism that partially involves suppression of NF-kappa-B. Also functions on nonhematopoietic cells, including endothelial cells where it induces vascular cell adhesion protein 1/VCAM1, which is important in the recruitment of eosinophils. Exerts its biological effects through its receptors which comprises the IL4R chain and the IL13RA1 chain, to activate JAK1 and TYK2, leading to the activation of STAT6. Aside from IL13RA1, another receptor IL13RA2 acts as a high affinity decoy for IL13 and mediates internalization and depletion of extracellular IL13. The chain is Interleukin-13 (IL13) from Homo sapiens (Human).